We begin with the raw amino-acid sequence, 501 residues long: Probable cytosol aminopeptidase (501 aa).

2 residues coordinate Mn(2+): Lys270 and Asp275. Lys282 is an active-site residue. 3 residues coordinate Mn(2+): Asp293, Asp352, and Glu354. The active site involves Arg356.

The protein belongs to the peptidase M17 family. Mn(2+) is required as a cofactor.

It is found in the cytoplasm. It carries out the reaction Release of an N-terminal amino acid, Xaa-|-Yaa-, in which Xaa is preferably Leu, but may be other amino acids including Pro although not Arg or Lys, and Yaa may be Pro. Amino acid amides and methyl esters are also readily hydrolyzed, but rates on arylamides are exceedingly low.. It catalyses the reaction Release of an N-terminal amino acid, preferentially leucine, but not glutamic or aspartic acids.. In terms of biological role, presumably involved in the processing and regular turnover of intracellular proteins. Catalyzes the removal of unsubstituted N-terminal amino acids from various peptides. The polypeptide is Probable cytosol aminopeptidase (Wigglesworthia glossinidia brevipalpis).